A 426-amino-acid polypeptide reads, in one-letter code: D-tagatose-1,6-bisphosphate aldolase subunit KbaZ (426 aa).

This sequence belongs to the GatZ/KbaZ family. KbaZ subfamily. Forms a complex with KbaY.

It functions in the pathway carbohydrate metabolism; D-tagatose 6-phosphate degradation; D-glyceraldehyde 3-phosphate and glycerone phosphate from D-tagatose 6-phosphate: step 2/2. Functionally, component of the tagatose-1,6-bisphosphate aldolase KbaYZ that is required for full activity and stability of the Y subunit. Could have a chaperone-like function for the proper and stable folding of KbaY. When expressed alone, KbaZ does not show any aldolase activity. The sequence is that of D-tagatose-1,6-bisphosphate aldolase subunit KbaZ from Escherichia coli O81 (strain ED1a).